The sequence spans 368 residues: SH3 domain-containing protein 2 (368 aa).

2 coiled-coil regions span residues 1-21 (MDAIRKQASRLREQVARQQQA) and 146-210 (LEDA…LGKE). Residues 1–264 (MDAIRKQASR…MVSERQRIEA (264 aa)) form the BAR domain. Positions 258 to 281 (ERQRIEAPSTPSSADSMPPPPSYE) are disordered. Residues 299–358 (MGYFLGEVLFPYHGVTDVELSLSTGEYVVVRKVTGSGWAEGECKGKAGWFPYGYIERRER) form the SH3 domain.

In terms of assembly, homodimer. Interacts with FREE1. Interacts (via SH3 domain) with ATG8E and ATG8F. Component of a phosphoinositide 3-kinase (PI3K) complex containing ATG6, SH3P2 and FREE1. Binds to SH3P3 and DRP1A. Forms a complex made of SH3P2 and DRP1A and triggers its accumulation at the cell plate. Highly expressed in seedlings. Detected in flowers, leaves and stems.

The protein localises to the cytoplasm. The protein resides in the cytoplasmic vesicle. It localises to the clathrin-coated vesicle. Its subcellular location is the cell membrane. It is found in the late endosome. The protein localises to the autophagosome membrane. Regulator for autophaosome formation and/or maturation. Binds phosphatidylinositol-phosphate; highest affinity for vesicles containing PtdIns(3,4,5)P(3), followed by those containing PtdIns(4,5)P(2) and PtdIns(3,4)P(2), with minimal binding to phosphatidylinositol monophosphates, including PtdIns(3)P. Together with DRP1A, converts the fused vesicles to tubular structures at the cell plate during cytokinesis. In Arabidopsis thaliana (Mouse-ear cress), this protein is SH3 domain-containing protein 2.